A 421-amino-acid polypeptide reads, in one-letter code: Protein OS-9 homolog (421 aa).

Residues 1–26 (MWRWSTGVRTMLGYAMCFLALGSALT) form the signal peptide. Residues 99 to 220 (EEATVGKKLE…LVSIPSLCEL (122 aa)) enclose the MRH domain. W115 is a binding site for a mannooligosaccharide derivative. The N-linked (GlcNAc...) asparagine glycan is linked to N125. 2 cysteine pairs are disulfide-bonded: C173-C206 and C188-C218. A mannooligosaccharide derivative contacts are provided by R180, E202, and Y208. 2 N-linked (GlcNAc...) asparagine glycosylation sites follow: N271 and N332. Residues 375–394 (GNSEDYEQQAPEQLDEEEAE) show a composition bias toward acidic residues. The tract at residues 375–403 (GNSEDYEQQAPEQLDEEEAELTSQSDDPA) is disordered.

Belongs to the OS-9 family. In terms of assembly, interacts with missfolded ER lumenal proteins.

It localises to the endoplasmic reticulum membrane. Its function is as follows. Lectin involved in the quality control of the secretory pathway. As a member of the endoplasmic reticulum-associated degradation lumenal (ERAD-L) surveillance system, targets misfolded endoplasmic reticulum lumenal glycoproteins for degradation. This chain is Protein OS-9 homolog (YOS9), found in Eremothecium gossypii (strain ATCC 10895 / CBS 109.51 / FGSC 9923 / NRRL Y-1056) (Yeast).